We begin with the raw amino-acid sequence, 302 residues long: Vomeronasal type-1 receptor 48 (302 aa).

Over 1 to 16 (MNENSRLHTHSNIRNT) the chain is Extracellular. A helical transmembrane segment spans residues 17–37 (FFSEIGIGISGNSFLLLFHII). Over 38-49 (KFFRGHRPRLTD) the chain is Cytoplasmic. Residues 50 to 70 (LPIGLLSLIHLLMLLVAAVIA) traverse the membrane as a helical segment. Over 71-91 (TDIFISWRGWNDIICKFLVYL) the chain is Extracellular. A disulfide bridge links C85 with C172. Residues 92–114 (YRSLRGLSLCTTSMLSVLQAIIL) traverse the membrane as a helical segment. Residues 115–131 (SPRSYCLAKFKRKSSHN) are Cytoplasmic-facing. Residues 132 to 152 (ISCAIIFLSVLYMSISSHLLI) traverse the membrane as a helical segment. Residues 153–193 (SITATPNLTMNDFLYVSQSCSLLPLSYLMQSIYSTLLVLRE) are Extracellular-facing. The N-linked (GlcNAc...) asparagine glycan is linked to N159. A helical membrane pass occupies residues 194–214 (VFLIGLMVLSTSYMVALLYMH). Residues 215-238 (RKQAQNLQGTSLSLKASAEQRATQ) are Cytoplasmic-facing. Residues 239–259 (TILMLMTFFVLMSIFDSIVSC) form a helical membrane-spanning segment. Residues 260–269 (SRTMFLDDPT) are Extracellular-facing. A helical transmembrane segment spans residues 270–290 (SYSIHIFVMHIYATVSPFVFI). Topologically, residues 291-302 (STEKHIVNILRG) are cytoplasmic.

It belongs to the G-protein coupled receptor 1 family.

It is found in the cell membrane. Putative pheromone receptor implicated in the regulation of social and reproductive behavior. The protein is Vomeronasal type-1 receptor 48 (Vmn1r48) of Mus musculus (Mouse).